The chain runs to 202 residues: Imidazoleglycerol-phosphate dehydratase (202 aa).

The protein belongs to the imidazoleglycerol-phosphate dehydratase family.

It is found in the cytoplasm. The catalysed reaction is D-erythro-1-(imidazol-4-yl)glycerol 3-phosphate = 3-(imidazol-4-yl)-2-oxopropyl phosphate + H2O. It functions in the pathway amino-acid biosynthesis; L-histidine biosynthesis; L-histidine from 5-phospho-alpha-D-ribose 1-diphosphate: step 6/9. The protein is Imidazoleglycerol-phosphate dehydratase of Rhizobium meliloti (strain 1021) (Ensifer meliloti).